Consider the following 121-residue polypeptide: Ribonuclease P protein component (121 aa).

This sequence belongs to the RnpA family. Consists of a catalytic RNA component (M1 or rnpB) and a protein subunit.

The catalysed reaction is Endonucleolytic cleavage of RNA, removing 5'-extranucleotides from tRNA precursor.. In terms of biological role, RNaseP catalyzes the removal of the 5'-leader sequence from pre-tRNA to produce the mature 5'-terminus. It can also cleave other RNA substrates such as 4.5S RNA. The protein component plays an auxiliary but essential role in vivo by binding to the 5'-leader sequence and broadening the substrate specificity of the ribozyme. The protein is Ribonuclease P protein component of Neisseria meningitidis serogroup A / serotype 4A (strain DSM 15465 / Z2491).